The sequence spans 838 residues: DNA gyrase subunit A (838 aa).

The Topo IIA-type catalytic domain maps to 41 to 510; that stretch reads LPEVRDGLKP…ADGDVSDEDL (470 aa). Y129 acts as the O-(5'-phospho-DNA)-tyrosine intermediate in catalysis. Residues 537-543 carry the GyrA-box motif; the sequence is QKRGGKG.

It belongs to the type II topoisomerase GyrA/ParC subunit family. In terms of assembly, heterotetramer, composed of two GyrA and two GyrB chains. In the heterotetramer, GyrA contains the active site tyrosine that forms a transient covalent intermediate with DNA, while GyrB binds cofactors and catalyzes ATP hydrolysis.

It localises to the cytoplasm. The enzyme catalyses ATP-dependent breakage, passage and rejoining of double-stranded DNA.. Its function is as follows. A type II topoisomerase that negatively supercoils closed circular double-stranded (ds) DNA in an ATP-dependent manner to modulate DNA topology and maintain chromosomes in an underwound state. Negative supercoiling favors strand separation, and DNA replication, transcription, recombination and repair, all of which involve strand separation. Also able to catalyze the interconversion of other topological isomers of dsDNA rings, including catenanes and knotted rings. Type II topoisomerases break and join 2 DNA strands simultaneously in an ATP-dependent manner. The chain is DNA gyrase subunit A from Mycobacterium tuberculosis (strain CDC 1551 / Oshkosh).